We begin with the raw amino-acid sequence, 257 residues long: Snake venom serine protease 3 (257 aa).

The first 18 residues, M1–A18, serve as a signal peptide directing secretion. The propeptide occupies Q19 to L24. A Peptidase S1 domain is found at V25–A248. Intrachain disulfides connect C31–C163, C50–C66, C98–C255, C142–C209, C174–C188, and C199–C224. A glycan (N-linked (GlcNAc...) asparagine) is linked at N44. The active-site Charge relay system is the H65. N-linked (GlcNAc...) asparagine glycosylation is present at N103. The active-site Charge relay system is D110. N-linked (GlcNAc...) asparagine glycosylation is found at N117 and N154. Residue S203 is the Charge relay system of the active site. N250 carries N-linked (GlcNAc...) asparagine glycosylation.

Belongs to the peptidase S1 family. Snake venom subfamily. Monomer. Expressed by the venom gland.

Its subcellular location is the secreted. Its function is as follows. Snake venom serine protease that may act in the hemostasis system of the prey. This chain is Snake venom serine protease 3 (TLF3), found in Protobothrops flavoviridis (Habu).